Consider the following 65-residue polypeptide: Neuropeptide-like protein 28 (65 aa).

An N-terminal signal peptide occupies residues 1 to 22 (MISTSSILILVFLLACFMATSA). Residues Y29, Y39, Y47, and Y55 each carry the tyrosine amide modification. W63 bears the Tryptophan amide mark.

Belongs to the YARP (YGGW-amide related peptide) family.

It is found in the secreted. In terms of biological role, may have antimicrobial activity. This is Neuropeptide-like protein 28 (nlp-28) from Caenorhabditis elegans.